Consider the following 334-residue polypeptide: Holliday junction branch migration complex subunit RuvB (334 aa).

The large ATPase domain (RuvB-L) stretch occupies residues 1–182 (MDERLVSSEL…FGVLSRLEYY (182 aa)). ATP is bound by residues Leu21, Arg22, Gly63, Lys66, Thr67, Thr68, 129–131 (EDF), Arg172, Tyr182, and Arg219. Thr67 lines the Mg(2+) pocket. A small ATPAse domain (RuvB-S) region spans residues 183 to 253 (TRDELSEIVI…VAVDALERLQ (71 aa)). The head domain (RuvB-H) stretch occupies residues 256–334 (KLGLDHIDRK…HFKMEVPNHD (79 aa)). DNA contacts are provided by Arg311 and Arg316.

Belongs to the RuvB family. Homohexamer. Forms an RuvA(8)-RuvB(12)-Holliday junction (HJ) complex. HJ DNA is sandwiched between 2 RuvA tetramers; dsDNA enters through RuvA and exits via RuvB. An RuvB hexamer assembles on each DNA strand where it exits the tetramer. Each RuvB hexamer is contacted by two RuvA subunits (via domain III) on 2 adjacent RuvB subunits; this complex drives branch migration. In the full resolvosome a probable DNA-RuvA(4)-RuvB(12)-RuvC(2) complex forms which resolves the HJ.

It localises to the cytoplasm. It catalyses the reaction ATP + H2O = ADP + phosphate + H(+). Its function is as follows. The RuvA-RuvB-RuvC complex processes Holliday junction (HJ) DNA during genetic recombination and DNA repair, while the RuvA-RuvB complex plays an important role in the rescue of blocked DNA replication forks via replication fork reversal (RFR). RuvA specifically binds to HJ cruciform DNA, conferring on it an open structure. The RuvB hexamer acts as an ATP-dependent pump, pulling dsDNA into and through the RuvAB complex. RuvB forms 2 homohexamers on either side of HJ DNA bound by 1 or 2 RuvA tetramers; 4 subunits per hexamer contact DNA at a time. Coordinated motions by a converter formed by DNA-disengaged RuvB subunits stimulates ATP hydrolysis and nucleotide exchange. Immobilization of the converter enables RuvB to convert the ATP-contained energy into a lever motion, pulling 2 nucleotides of DNA out of the RuvA tetramer per ATP hydrolyzed, thus driving DNA branch migration. The RuvB motors rotate together with the DNA substrate, which together with the progressing nucleotide cycle form the mechanistic basis for DNA recombination by continuous HJ branch migration. Branch migration allows RuvC to scan DNA until it finds its consensus sequence, where it cleaves and resolves cruciform DNA. The chain is Holliday junction branch migration complex subunit RuvB from Bacillus licheniformis (strain ATCC 14580 / DSM 13 / JCM 2505 / CCUG 7422 / NBRC 12200 / NCIMB 9375 / NCTC 10341 / NRRL NRS-1264 / Gibson 46).